The following is a 639-amino-acid chain: Chaperone protein HtpG (639 aa).

An a; substrate-binding region spans residues 1 to 348; sequence MAQYEFQTEV…SEDLPLNVSR (348 aa). The b stretch occupies residues 349 to 565; the sequence is EILQQNRVLA…ENDPTVQMER (217 aa). Residues 566–639 form a c region; it reads LMRATGQTHK…KRVNRLLARG (74 aa).

This sequence belongs to the heat shock protein 90 family. In terms of assembly, homodimer.

The protein resides in the cytoplasm. Its function is as follows. Molecular chaperone. Has ATPase activity. This chain is Chaperone protein HtpG, found in Treponema pallidum (strain Nichols).